Consider the following 195-residue polypeptide: Glycerol-3-phosphate acyltransferase 1 (195 aa).

5 helical membrane-spanning segments follow: residues 6–26 (VILTGIFMAYAVGSLAGGHFL), 52–72 (LGIAAGIMTFIWDTAKGFLVV), 74–94 (LGLKGGGAELGVLMALAAVAG), 117–137 (LAVYPAAVPPGAALMGLLTFL), and 168–188 (FGLGLAAIMLLRHGPLVISLF).

This sequence belongs to the PlsY family. Probably interacts with PlsX.

It is found in the cell membrane. The catalysed reaction is an acyl phosphate + sn-glycerol 3-phosphate = a 1-acyl-sn-glycero-3-phosphate + phosphate. Its pathway is lipid metabolism; phospholipid metabolism. Catalyzes the transfer of an acyl group from acyl-phosphate (acyl-PO(4)) to glycerol-3-phosphate (G3P) to form lysophosphatidic acid (LPA). This enzyme utilizes acyl-phosphate as fatty acyl donor, but not acyl-CoA or acyl-ACP. This is Glycerol-3-phosphate acyltransferase 1 from Moorella thermoacetica (strain ATCC 39073 / JCM 9320).